The following is a 225-amino-acid chain: MYSIKTDHKLMPRERLIRLGPEKLSNQELLAILLRTGNKEKHVLELSAYLLSSLDSLADLKKFSLQELQRLSGIGKVKAIEIKAMLELADRIQIAGQAVADPVLSSAQVAEKMMIELGDKQQEHLVAIYLDSQNKIIEEKTIFIGTVRKSIAEPREILYYACKNMATSLIVVHNHPSGLTKPSANDYHFTEKIKRSCDYLGLICLDHIIVSKHGYYSFREKSDLF.

Residues proline 102–leucine 224 enclose the MPN domain. 3 residues coordinate Zn(2+): histidine 173, histidine 175, and aspartate 186. Positions histidine 173–aspartate 186 match the JAMM motif motif.

The protein belongs to the UPF0758 family.

The protein is UPF0758 protein SZO_09140 of Streptococcus equi subsp. zooepidemicus (strain H70).